Consider the following 534-residue polypeptide: Sodium-dependent lysophosphatidylcholine symporter 1 (534 aa).

Residues 1–39 (MAKGEGAESGSAAGLLPTSILQASERPVQVKKEPKKKQQ) lie on the Cytoplasmic side of the membrane. The chain crosses the membrane as a helical span at residues 40–69 (LSICNKLCYAVGGAPYQLTGCALGFFLQIY). Over 70 to 80 (LLDVAKVEPLP) the chain is Extracellular. The helical transmembrane segment at 81 to 101 (ASIILFVGRAWDAFTDPLVGF) threads the bilayer. Residues 102-113 (CISKSSWTRLGR) lie on the Cytoplasmic side of the membrane. A helical membrane pass occupies residues 114–133 (LMPWIIFSTPLAIIAYFLIW). Residues 134–148 (FVPDFPSGTESSHGF) lie on the Extracellular side of the membrane. A helical membrane pass occupies residues 149-173 (LWYLLFYCLFETLVTCFHVPYSALT). Residues 174 to 180 (MFISTEQ) lie on the Cytoplasmic side of the membrane. A helical membrane pass occupies residues 181–212 (SERDSATAYRMTVEVLGTVIGTAIQGQIVGQA). At 213–232 (KAPCLQDQNGSVVVSEVANR) the chain is on the extracellular side. Residues Cys216 and Cys464 are joined by a disulfide bond. Residues Asn221 and Asn231 are each glycosylated (N-linked (GlcNAc...) asparagine). A helical membrane pass occupies residues 233-266 (TQSTASLKDTQNAYLLAAGIIASIYVLCAFILIL). Topologically, residues 267 to 297 (GVREQRELYESQQAESMPFFQGLRLVMGHGP) are cytoplasmic. A helical transmembrane segment spans residues 298 to 324 (YVKLIAGFLFTSLAFMLVEGNFALFCT). Over 325 to 335 (YTLDFRNEFQN) the chain is Extracellular. A helical transmembrane segment spans residues 336 to 354 (LLLAIMLSATFTIPIWQWF). Topologically, residues 355–358 (LTRF) are cytoplasmic. A helical transmembrane segment spans residues 359–380 (GKKTAVYIGISSAVPFLILVAL). The Extracellular portion of the chain corresponds to 381 to 383 (MER). The helical transmembrane segment at 384–420 (NLIVTYVVAVAAGVSVAAAFLLPWSMLPDVIDDFHLK) threads the bilayer. Over 421–430 (HPHSPGTEPI) the chain is Cytoplasmic. A helical transmembrane segment spans residues 431–457 (FFSFYVFFTKFASGVSLGVSTLSLDFA). Topologically, residues 458 to 469 (NYQRQGCSQPEQ) are extracellular. A helical transmembrane segment spans residues 470 to 493 (VKFTLKMLVTMAPIILILLGLLLF). Over 494-534 (KLYPIDEEKRRQNKKALQALREEASSSGCSDTDSTELASIL) the chain is Cytoplasmic.

Belongs to the major facilitator superfamily. In terms of processing, N-glycosylated. Widely expressed. Exhibits an oscillatory pattern of expression in brown adipose tissue and liver consistent with a circadian rhythm. Enriched in brain micro-vessels, where it is specifically present in endothelium constituting the blood-brain barrier (at protein level).

It localises to the cell membrane. Its subcellular location is the endoplasmic reticulum membrane. It catalyses the reaction a 1-acyl-sn-glycero-3-phosphocholine(in) + Na(+)(in) = a 1-acyl-sn-glycero-3-phosphocholine(out) + Na(+)(out). The enzyme catalyses 1-(4Z,7Z,10Z,13Z,16Z,19Z-docosahexaenoyl)-sn-glycero-3-phosphocholine(in) + Na(+)(in) = 1-(4Z,7Z,10Z,13Z,16Z,19Z-docosahexaenoyl)-sn-glycero-3-phosphocholine(out) + Na(+)(out). The catalysed reaction is 1-(9Z-octadecenoyl)-sn-glycero-3-phosphocholine(in) + Na(+)(in) = 1-(9Z-octadecenoyl)-sn-glycero-3-phosphocholine(out) + Na(+)(out). It carries out the reaction 1-hexadecanoyl-sn-glycero-3-phosphocholine(in) + Na(+)(in) = 1-hexadecanoyl-sn-glycero-3-phosphocholine(out) + Na(+)(out). It catalyses the reaction a 1-acyl-sn-glycero-3-phosphoethanolamine(in) + Na(+)(in) = a 1-acyl-sn-glycero-3-phosphoethanolamine(out) + Na(+)(out). In terms of biological role, sodium-dependent lysophosphatidylcholine (LPC) symporter, which plays an essential role for blood-brain barrier formation and function. Specifically expressed in endothelium of the blood-brain barrier of micro-vessels and transports LPC into the brain. Transport of LPC is essential because it constitutes the major mechanism by which docosahexaenoic acid (DHA), an omega-3 fatty acid that is essential for normal brain growth and cognitive function, enters the brain. Transports LPC carrying long-chain fatty acids such LPC oleate and LPC palmitate with a minimum acyl chain length of 14 carbons. Does not transport docosahexaenoic acid in unesterified fatty acid. Not required for central nervous system vascular morphogenesis. In Mus musculus (Mouse), this protein is Sodium-dependent lysophosphatidylcholine symporter 1.